The following is a 215-amino-acid chain: N-(5'-phosphoribosyl)anthranilate isomerase (215 aa).

It belongs to the TrpF family.

The enzyme catalyses N-(5-phospho-beta-D-ribosyl)anthranilate = 1-(2-carboxyphenylamino)-1-deoxy-D-ribulose 5-phosphate. It functions in the pathway amino-acid biosynthesis; L-tryptophan biosynthesis; L-tryptophan from chorismate: step 3/5. This chain is N-(5'-phosphoribosyl)anthranilate isomerase, found in Pelodictyon phaeoclathratiforme (strain DSM 5477 / BU-1).